Here is a 183-residue protein sequence, read N- to C-terminus: Threonylcarbamoyl-AMP synthase (183 aa).

Positions 1 to 183 (MNREQIANAL…LRTNQLFRQG (183 aa)) constitute a YrdC-like domain.

This sequence belongs to the SUA5 family. TsaC subfamily.

The protein localises to the cytoplasm. The catalysed reaction is L-threonine + hydrogencarbonate + ATP = L-threonylcarbamoyladenylate + diphosphate + H2O. Functionally, required for the formation of a threonylcarbamoyl group on adenosine at position 37 (t(6)A37) in tRNAs that read codons beginning with adenine. Catalyzes the conversion of L-threonine, HCO(3)(-)/CO(2) and ATP to give threonylcarbamoyl-AMP (TC-AMP) as the acyladenylate intermediate, with the release of diphosphate. The protein is Threonylcarbamoyl-AMP synthase of Haemophilus influenzae (strain PittEE).